Consider the following 206-residue polypeptide: Oligoribonuclease (206 aa).

Residues 20 to 183 (LVWLDMEMTG…ADIHESIDEL (164 aa)) form the Exonuclease domain. Tyr-141 is an active-site residue.

It belongs to the oligoribonuclease family.

It is found in the cytoplasm. Functionally, 3'-to-5' exoribonuclease specific for small oligoribonucleotides. This chain is Oligoribonuclease, found in Burkholderia ambifaria (strain ATCC BAA-244 / DSM 16087 / CCUG 44356 / LMG 19182 / AMMD) (Burkholderia cepacia (strain AMMD)).